Reading from the N-terminus, the 273-residue chain is Large ribosomal subunit protein uL2 (273 aa).

Positions 228-273 are disordered; the sequence is VDHPHGGGEGKTSGGRHPVTPWGFPTKGKKTRKNKRTSKFIVKKRK. Positions 254–273 are enriched in basic residues; the sequence is KGKKTRKNKRTSKFIVKKRK.

It belongs to the universal ribosomal protein uL2 family. Part of the 50S ribosomal subunit. Forms a bridge to the 30S subunit in the 70S ribosome.

One of the primary rRNA binding proteins. Required for association of the 30S and 50S subunits to form the 70S ribosome, for tRNA binding and peptide bond formation. It has been suggested to have peptidyltransferase activity; this is somewhat controversial. Makes several contacts with the 16S rRNA in the 70S ribosome. The polypeptide is Large ribosomal subunit protein uL2 (Rickettsia massiliae (strain Mtu5)).